The following is a 783-amino-acid chain: LPS-assembly protein LptD (783 aa).

The first 24 residues, 1–24 (MSCFSRTFLAASISAALFAPQIQA), serve as a signal peptide directing secretion.

This sequence belongs to the LptD family. In terms of assembly, component of the lipopolysaccharide transport and assembly complex. Interacts with LptE and LptA.

It localises to the cell outer membrane. Functionally, together with LptE, is involved in the assembly of lipopolysaccharide (LPS) at the surface of the outer membrane. This chain is LPS-assembly protein LptD, found in Vibrio cholerae serotype O1 (strain ATCC 39315 / El Tor Inaba N16961).